Reading from the N-terminus, the 481-residue chain is Cysteine--tRNA ligase (481 aa).

Position 29 (Cys29) interacts with Zn(2+). The short motif at 31–41 (PTVYDYSHLGH) is the 'HIGH' region element. Positions 210, 235, and 239 each coordinate Zn(2+). A 'KMSKS' region motif is present at residues 272–276 (KMSKS). ATP is bound at residue Lys275.

It belongs to the class-I aminoacyl-tRNA synthetase family. As to quaternary structure, monomer. The cofactor is Zn(2+).

The protein localises to the cytoplasm. It carries out the reaction tRNA(Cys) + L-cysteine + ATP = L-cysteinyl-tRNA(Cys) + AMP + diphosphate. The sequence is that of Cysteine--tRNA ligase from Anaeromyxobacter sp. (strain K).